Here is a 319-residue protein sequence, read N- to C-terminus: Annexin A4 (319 aa).

Residue Ala2 is modified to N-acetylalanine. Thr7 carries the post-translational modification Phosphothreonine. Ser12 is modified (phosphoserine). 4 Annexin repeats span residues 14–85, 86–157, 169–241, and 245–316; these read FSAT…GMIT, PTVL…SLSA, ALMR…AIVK, and NKSA…ILCG. Lys213, Lys293, and Lys300 each carry N6-acetyllysine.

It belongs to the annexin family. Expressed in pancreas (at protein level). Also detected in liver, spleen, intestine, stomach, kidney, and adrenal glands.

It localises to the zymogen granule membrane. Functionally, calcium/phospholipid-binding protein which promotes membrane fusion and is involved in exocytosis. This Canis lupus familiaris (Dog) protein is Annexin A4 (ANXA4).